We begin with the raw amino-acid sequence, 128 residues long: Ribonuclease P protein component (128 aa).

This sequence belongs to the RnpA family. In terms of assembly, consists of a catalytic RNA component (M1 or rnpB) and a protein subunit.

The enzyme catalyses Endonucleolytic cleavage of RNA, removing 5'-extranucleotides from tRNA precursor.. In terms of biological role, RNaseP catalyzes the removal of the 5'-leader sequence from pre-tRNA to produce the mature 5'-terminus. It can also cleave other RNA substrates such as 4.5S RNA. The protein component plays an auxiliary but essential role in vivo by binding to the 5'-leader sequence and broadening the substrate specificity of the ribozyme. This chain is Ribonuclease P protein component, found in Prochlorococcus marinus (strain MIT 9312).